The following is a 379-amino-acid chain: Protein hairy (379 aa).

Positions 20–50 (STQQQQQQQQHKEAPIKSDRRSNKPIMEKRR) are disordered. A compositionally biased stretch (basic and acidic residues) spans 29–47 (QHKEAPIKSDRRSNKPIME). Residues 36–55 (KSDRRSNKPIMEKRRRARIN) form an interaction with Topors region. The bHLH domain occupies 38 to 95 (DRRSNKPIMEKRRRARINNCLNELKTLILDATKKDPARHSKLEKADILEKTVKHLQEL). The region spanning 114-143 (FKAGFADCANEVSRFPGLDSTQRRRLLQHL) is the Orange domain. Disordered stretches follow at residues 167–208 (QSLH…NTTA) and 298–345 (QRTA…VKPS). Composition is skewed to low complexity over residues 182 to 207 (PEQE…TNTT) and 301 to 328 (ASTG…GSYA). The WRPW motif motif lies at 376–379 (WRPW).

Transcription repression requires formation of a complex with a corepressor protein (Groucho).

It localises to the nucleus. Functionally, pair-rule protein that regulates embryonic segmentation and adult bristle patterning. Transcriptional repressor of genes that require a bHLH protein for their transcription (e.g. ftz). This is Protein hairy from Drosophila virilis (Fruit fly).